We begin with the raw amino-acid sequence, 224 residues long: Large ribosomal subunit protein uL1 (224 aa).

Belongs to the universal ribosomal protein uL1 family. In terms of assembly, part of the 50S ribosomal subunit.

In terms of biological role, binds directly to 23S rRNA. The L1 stalk is quite mobile in the ribosome, and is involved in E site tRNA release. Functionally, protein L1 is also a translational repressor protein, it controls the translation of the L11 operon by binding to its mRNA. This Borrelia hermsii (strain HS1 / DAH) protein is Large ribosomal subunit protein uL1.